The sequence spans 219 residues: Mucosal pentraxin (219 aa).

A signal peptide spans M1–S19. A Pentraxin (PTX) domain is found at D24–T219. C55 and C114 are oxidised to a cystine. Ca(2+) contacts are provided by D77, N78, E155, Q156, D157, and Q167.

The protein belongs to the pentraxin family. In terms of assembly, homopentamer. Pentraxin (or pentaxin) have a discoid arrangement of 5 non-covalently bound subunits. It depends on Ca(2+) as a cofactor. As to expression, expression is restricted to small intestine, stomach and colon. Within colon, expressed in epithelial cells located within the lower to mid region of transverse and distal crypts, but not in proximal colon.

The protein resides in the secreted. In Rattus norvegicus (Rat), this protein is Mucosal pentraxin (Mptx1).